The chain runs to 209 residues: Large ribosomal subunit protein uL3 (209 aa).

The protein belongs to the universal ribosomal protein uL3 family. Part of the 50S ribosomal subunit. Forms a cluster with proteins L14 and L19.

In terms of biological role, one of the primary rRNA binding proteins, it binds directly near the 3'-end of the 23S rRNA, where it nucleates assembly of the 50S subunit. The sequence is that of Large ribosomal subunit protein uL3 from Brevibacillus brevis (strain 47 / JCM 6285 / NBRC 100599).